A 520-amino-acid chain; its full sequence is UDP-N-acetylmuramoyl-L-alanyl-D-glutamate--2,6-diaminopimelate ligase (520 aa).

Residue leucine 48 participates in UDP-N-acetyl-alpha-D-muramoyl-L-alanyl-D-glutamate binding. 134–140 (GTSGKTT) is a binding site for ATP. UDP-N-acetyl-alpha-D-muramoyl-L-alanyl-D-glutamate contacts are provided by residues 176–177 (TT), serine 203, and arginine 211. At lysine 243 the chain carries N6-carboxylysine. Meso-2,6-diaminopimelate contacts are provided by residues arginine 405, 429–432 (DNPR), glycine 483, and glutamate 487. The Meso-diaminopimelate recognition motif motif lies at 429 to 432 (DNPR).

Belongs to the MurCDEF family. MurE subfamily. Requires Mg(2+) as cofactor. Post-translationally, carboxylation is probably crucial for Mg(2+) binding and, consequently, for the gamma-phosphate positioning of ATP.

It is found in the cytoplasm. It carries out the reaction UDP-N-acetyl-alpha-D-muramoyl-L-alanyl-D-glutamate + meso-2,6-diaminopimelate + ATP = UDP-N-acetyl-alpha-D-muramoyl-L-alanyl-gamma-D-glutamyl-meso-2,6-diaminopimelate + ADP + phosphate + H(+). It functions in the pathway cell wall biogenesis; peptidoglycan biosynthesis. Catalyzes the addition of meso-diaminopimelic acid to the nucleotide precursor UDP-N-acetylmuramoyl-L-alanyl-D-glutamate (UMAG) in the biosynthesis of bacterial cell-wall peptidoglycan. The protein is UDP-N-acetylmuramoyl-L-alanyl-D-glutamate--2,6-diaminopimelate ligase of Mycobacterium avium (strain 104).